A 387-amino-acid chain; its full sequence is WD repeat-containing protein 55 (387 aa).

The span at 1 to 10 shows a compositional bias: basic and acidic residues; sequence MATPTEHEDL. The tract at residues 1 to 24 is disordered; it reads MATPTEHEDLSEQEVTEDEFKTPK. WD repeat units follow at residues 33 to 72, 79 to 118, 122 to 160, 163 to 202, 205 to 244, 247 to 286, and 290 to 329; these read KLEA…GENK, HHLK…LETR, AHKV…SFMD, HHED…FELL, IQNG…ATSD, AVQA…VVGS, and HVGE…DEKV. Residues 356 to 387 form a disordered region; it reads FFAGLLDTTEENGKEGENDEDDDDEDSDSGSD. Over residues 372 to 387 the composition is skewed to acidic residues; sequence ENDEDDDDEDSDSGSD.

Belongs to the WD repeat WDR55 family.

It is found in the nucleus. Its subcellular location is the nucleolus. Nucleolar protein that acts as a modulator of rRNA synthesis. Plays a central role during organogenesis. The chain is WD repeat-containing protein 55 (wdr55) from Danio rerio (Zebrafish).